The chain runs to 251 residues: Imidazole glycerol phosphate synthase subunit HisF (251 aa).

Residues D11 and D130 contribute to the active site.

Belongs to the HisA/HisF family. As to quaternary structure, heterodimer of HisH and HisF.

Its subcellular location is the cytoplasm. The enzyme catalyses 5-[(5-phospho-1-deoxy-D-ribulos-1-ylimino)methylamino]-1-(5-phospho-beta-D-ribosyl)imidazole-4-carboxamide + L-glutamine = D-erythro-1-(imidazol-4-yl)glycerol 3-phosphate + 5-amino-1-(5-phospho-beta-D-ribosyl)imidazole-4-carboxamide + L-glutamate + H(+). It functions in the pathway amino-acid biosynthesis; L-histidine biosynthesis; L-histidine from 5-phospho-alpha-D-ribose 1-diphosphate: step 5/9. Functionally, IGPS catalyzes the conversion of PRFAR and glutamine to IGP, AICAR and glutamate. The HisF subunit catalyzes the cyclization activity that produces IGP and AICAR from PRFAR using the ammonia provided by the HisH subunit. This Chlorobium limicola (strain DSM 245 / NBRC 103803 / 6330) protein is Imidazole glycerol phosphate synthase subunit HisF.